The chain runs to 184 residues: Probable RNA 2'-phosphotransferase (184 aa).

This sequence belongs to the KptA/TPT1 family.

Removes the 2'-phosphate from RNA via an intermediate in which the phosphate is ADP-ribosylated by NAD followed by a presumed transesterification to release the RNA and generate ADP-ribose 1''-2''-cyclic phosphate (APPR&gt;P). May function as an ADP-ribosylase. In Rhizobium johnstonii (strain DSM 114642 / LMG 32736 / 3841) (Rhizobium leguminosarum bv. viciae), this protein is Probable RNA 2'-phosphotransferase.